The primary structure comprises 197 residues: Protein GrpE (197 aa).

The span at 1–31 (MSDDTKKQDTAADAEVEKEMEGVPEHLRDDR) shows a compositional bias: basic and acidic residues. The disordered stretch occupies residues 1-48 (MSDDTKKQDTAADAEVEKEMEGVPEHLRDDRGSEEDASDDLSAALESL).

The protein belongs to the GrpE family. In terms of assembly, homodimer.

The protein resides in the cytoplasm. Functionally, participates actively in the response to hyperosmotic and heat shock by preventing the aggregation of stress-denatured proteins, in association with DnaK and GrpE. It is the nucleotide exchange factor for DnaK and may function as a thermosensor. Unfolded proteins bind initially to DnaJ; upon interaction with the DnaJ-bound protein, DnaK hydrolyzes its bound ATP, resulting in the formation of a stable complex. GrpE releases ADP from DnaK; ATP binding to DnaK triggers the release of the substrate protein, thus completing the reaction cycle. Several rounds of ATP-dependent interactions between DnaJ, DnaK and GrpE are required for fully efficient folding. The protein is Protein GrpE of Erythrobacter litoralis (strain HTCC2594).